We begin with the raw amino-acid sequence, 289 residues long: Acetyl-coenzyme A carboxylase carboxyl transferase subunit beta (289 aa).

A CoA carboxyltransferase N-terminal domain is found at 34-289 (MWVKCNKCGE…KLINMHQNSF (256 aa)). The Zn(2+) site is built by cysteine 38, cysteine 41, cysteine 57, and cysteine 60. A C4-type zinc finger spans residues 38–60 (CNKCGEILYQNDLEKNYMVCNLC).

The protein belongs to the AccD/PCCB family. In terms of assembly, acetyl-CoA carboxylase is a heterohexamer composed of biotin carboxyl carrier protein (AccB), biotin carboxylase (AccC) and two subunits each of ACCase subunit alpha (AccA) and ACCase subunit beta (AccD). Zn(2+) is required as a cofactor.

Its subcellular location is the cytoplasm. It carries out the reaction N(6)-carboxybiotinyl-L-lysyl-[protein] + acetyl-CoA = N(6)-biotinyl-L-lysyl-[protein] + malonyl-CoA. Its pathway is lipid metabolism; malonyl-CoA biosynthesis; malonyl-CoA from acetyl-CoA: step 1/1. Component of the acetyl coenzyme A carboxylase (ACC) complex. Biotin carboxylase (BC) catalyzes the carboxylation of biotin on its carrier protein (BCCP) and then the CO(2) group is transferred by the transcarboxylase to acetyl-CoA to form malonyl-CoA. The polypeptide is Acetyl-coenzyme A carboxylase carboxyl transferase subunit beta (Clostridium botulinum (strain ATCC 19397 / Type A)).